Consider the following 656-residue polypeptide: MVNEARGNSSLNPCLEGSASSGSESSKDSSRCSTPGLDPERHERLREKMRRRLESGDKWFSLEFFPPRTAEGAVNLISRFDRMAAGGPLYIDVTWHPAGDPGSDKETSSMMIASTAVNYCGLETILHMTCCRQRLEEITGHLHKAKQLGLKNIMALRGDPIGDQWEEEEGGFNYAVDLVKHIRSEFGDYFDICVAGYPKGHPEAGSFEADLKHLKEKVSAGADFIITQLFFEADTFFRFVKACTDMGITCPIVPGIFPIQGYHSLRQLVKLSKLEVPQEIKDVIEPIKDNDAAIRNYGIELAVSLCQELLASGLVPGLHFYTLNREMATTEVLKRLGMWTEDPRRPLPWALSAHPKRREEDVRPIFWASRPKSYIYRTQEWDEFPNGRWGNSSSPAFGELKDYYLFYLKSKSPKEELLKMWGEELTSEESVFEVFVLYLSGEPNRNGHKVTCLPWNDEPLAAETSLLKEELLRVNRQGILTINSQPNINGKPSSDPIVGWGPSGGYVFQKAYLEFFTSRETAEALLQVLKKYELRVNYHLVNVKGENITNAPELQPNAVTWGIFPGREIIQPTVVDPVSFMFWKDEAFALWIERWGKLYEEESPSRTIIQYIHDNYFLVNLVDNDFPLDNCLWQVVEDTLELLNRPTQNARETEAP.

The segment covering 1–12 (MVNEARGNSSLN) has biased composition (polar residues). Residues 1–44 (MVNEARGNSSLNPCLEGSASSGSESSKDSSRCSTPGLDPERHER) are disordered. A phosphoserine mark is found at Ser9, Ser10, Ser18, Ser20, Ser21, Ser23, Ser25, Ser26, Ser29, and Ser30. Thr34 bears the Phosphothreonine mark. Catalysis depends on Glu63, which acts as the Proton donor/acceptor. 63-68 (EFFPPR) is an NAD(+) binding site. Phosphotyrosine is present on Tyr90. Thr94 bears the Phosphothreonine mark. 94 to 95 (TW) is a binding site for NAD(+). 94 to 95 (TW) is an FAD binding site. At Ser103 the chain carries Phosphoserine. FAD is bound by residues His127, 157–159 (RGD), 174–175 (YA), Tyr197, 201–204 (HPEA), Asp210, and Lys217. Position 159 (Asp159) interacts with substrate. Residues Gln228, Tyr321, and Arg325 each contribute to the substrate site. Ser394 carries the phosphoserine modification. Thr451 bears the Phosphothreonine mark. S-adenosyl-L-methionine contacts are provided by residues Asn456, 461 to 464 (AAET), 481 to 485 (TINSQ), Thr560, and Thr573.

The protein belongs to the methylenetetrahydrofolate reductase family. In terms of assembly, homodimer. FAD serves as cofactor. Phosphorylation of an N-terminal serine-rich phosphorylation region increases sensitivity to S-adenosylmethionine and inhibition.

It catalyses the reaction (6S)-5-methyl-5,6,7,8-tetrahydrofolate + NADP(+) = (6R)-5,10-methylene-5,6,7,8-tetrahydrofolate + NADPH + H(+). The protein operates within one-carbon metabolism; tetrahydrofolate interconversion. Its activity is regulated as follows. Allosterically regulated by S-adenosylmethionine (SAM). Catalyzes the conversion of 5,10-methylenetetrahydrofolate to 5-methyltetrahydrofolate, a cosubstrate for homocysteine remethylation to methionine. Represents a key regulatory connection between the folate and methionine cycles. The sequence is that of Methylenetetrahydrofolate reductase (NADPH) from Homo sapiens (Human).